The following is a 218-amino-acid chain: Transmembrane gamma-carboxyglutamic acid protein 1 (218 aa).

A propeptide spanning residues 1–20 (MGRVFLTGEKANSILKRYPR) is cleaved from the precursor. The 46-residue stretch at 21–66 (ANGFFEEIRQGNIERECKEEFCTFEEAREAFENNEKTKEFWSTYTK) folds into the Gla domain. Topologically, residues 21–83 (ANGFFEEIRQ…RGSDWFQFYL (63 aa)) are extracellular. Cys-37 and Cys-42 are oxidised to a cystine. The chain crosses the membrane as a helical span at residues 84-106 (TFPLIFGLFIILLVIFLIWRCFL). Residues 107 to 218 (RNKTRRQTVT…PMVPVVTTIK (112 aa)) lie on the Cytoplasmic side of the membrane. The tract at residues 161 to 195 (TRLSNCDPPPTYEEATGQVNLQRSETEPHLDPPPE) is disordered.

Post-translationally, gla residues are produced after subsequent post-translational modifications of glutamate by a vitamin K-dependent gamma-carboxylase. Highly expressed in the spinal cord.

The protein resides in the membrane. This chain is Transmembrane gamma-carboxyglutamic acid protein 1 (PRRG1), found in Homo sapiens (Human).